The sequence spans 404 residues: Zinc finger CCCH domain-containing protein 3 (404 aa).

C3H1-type zinc fingers lie at residues 47–75, 90–118, 135–163, 261–289, and 307–335; these read RPGE…HPTH, RIGQ…HPKD, RLGE…HPQP, SSDQ…HPGV, and RPGQ…HPML. Residues 350-374 show a composition bias toward polar residues; the sequence is FASPVTTHQRISPTPNRSDSKSLSN. The segment at 350–404 is disordered; sequence FASPVTTHQRISPTPNRSDSKSLSNGKPDVKKESSETEKPDNGEVQDLSEDASSP. Residues 377–391 are compositionally biased toward basic and acidic residues; sequence PDVKKESSETEKPDN.

The protein resides in the nucleus. Its function is as follows. Possesses RNA-binding and ribonuclease activities in vitro. The sequence is that of Zinc finger CCCH domain-containing protein 3 from Arabidopsis thaliana (Mouse-ear cress).